The chain runs to 645 residues: Cyclic nucleotide-gated channel rod photoreceptor subunit alpha (645 aa).

Residues 1–121 (MKVGVIETHH…PAGNMYYNWL (121 aa)) lie on the Cytoplasmic side of the membrane. The interval 53–100 (NNNSNKDEEKKKKKEKKSKSENKKDGERQKNKEKKEKHKNKDKKKGKE) is disordered. A compositionally biased stretch (basic and acidic residues) spans 70–86 (SKSENKKDGERQKNKEK). The segment covering 87–96 (KEKHKNKDKK) has biased composition (basic residues). Residues 122–143 (FCITMPVMYNWTMIIARACFDE) traverse the membrane as a helical segment. The Extracellular segment spans residues 144–153 (LQNDYLAVWF). The helical transmembrane segment at 154-174 (IVDYVSDVIYIADMFVRTRTG) threads the bilayer. Over 175 to 199 (YLEQGLLVKEEQKLKEKYKSSLQFK) the chain is Cytoplasmic. The chain crosses the membrane as a helical span at residues 200–218 (LDFLSIIPTDLLYFKLGLN). Topologically, residues 219-223 (YPELR) are extracellular. The helical transmembrane segment at 224–242 (INRLLRVARMFEFFQRTET) threads the bilayer. The Cytoplasmic portion of the chain corresponds to 243–249 (RTNYPNI). A helical membrane pass occupies residues 250–273 (FRISNLVMYIVIIIHWNACVYYSI). The Extracellular portion of the chain corresponds to 274–296 (SKAIGFGADTWVYPNTSHPEFAR). Transmembrane regions (helical) follow at residues 297-331 (LTRK…FFVV) and 332-356 (VDFL…SNMN). The Cytoplasmic portion of the chain corresponds to 357 to 645 (AARAEFQAKI…TDKPGVTKTE (289 aa)). Residues 439-561 (LLVE…DGLL), Glu498, and Arg513 each bind 3',5'-cyclic GMP.

Belongs to the cyclic nucleotide-gated cation channel (TC 1.A.1.5) family.

It localises to the membrane. Visual signal transduction is mediated by a G-protein coupled cascade using cGMP as second messenger. This protein can be activated by cGMP which leads to an opening of the cation channel and thereby causing a depolarization of rod photoreceptors. The protein is Cyclic nucleotide-gated channel rod photoreceptor subunit alpha of Gallus gallus (Chicken).